The chain runs to 521 residues: MAP kinase-activated protein kinase mak-1 (521 aa).

Residues 1 to 12 (MMFEYEEDEDPM) are compositionally biased toward acidic residues. The segment at 1–36 (MMFEYEEDEDPMEQQKHEEFKHHSTDHSGSPQENPF) is disordered. Residues 13–26 (EQQKHEEFKHHSTD) are compositionally biased toward basic and acidic residues. One can recognise a Protein kinase domain in the interval 144–405 (TISAEIIGIG…IHELMATPLV (262 aa)). Residues 150-158 (IGIGESGKV) and Lys-173 each bind ATP. Asp-266 (proton acceptor) is an active-site residue.

This sequence belongs to the protein kinase superfamily. CAMK Ser/Thr protein kinase family. May interact (via protein kinase domain) with unc-22 (via protein kinase and CRD domains). The cofactor is Mg(2+). Autophosphorylated in vitro. As to expression, expressed in body wall muscles (at protein level). Expressed in intestine.

Its subcellular location is the cytoplasm. The protein resides in the myofibril. It localises to the sarcomere. The protein localises to the a band. It catalyses the reaction L-seryl-[protein] + ATP = O-phospho-L-seryl-[protein] + ADP + H(+). The enzyme catalyses L-threonyl-[protein] + ATP = O-phospho-L-threonyl-[protein] + ADP + H(+). Functionally, serine/threonine-protein kinase which may play a role in body wall muscle contraction. May phosphorylate unc-22/twitchin. The sequence is that of MAP kinase-activated protein kinase mak-1 from Caenorhabditis elegans.